The primary structure comprises 671 residues: Polyadenylate-binding protein 8 (671 aa).

4 RRM domains span residues 45 to 123 (TSLY…YSVR), 133 to 210 (GNIF…PFVH), 224 to 301 (TNVY…KAQK), and 327 to 404 (SNLY…LAQR). The tract at residues 467-526 (LVPGMRPGGSPMPNFFMPMMQQGQQQQQQQQQQQRPGGGRRGALPQPQQPSPMMQQQMHP) is disordered. Composition is skewed to low complexity over residues 483–501 (MPMM…QQQR) and 508–525 (GALP…QQMH). Positions 573–650 (PIVALATRLA…AMDVLRSVAQ (78 aa)) constitute a PABC domain.

It belongs to the polyadenylate-binding protein type-1 family. As to quaternary structure, interacts with ERD15/CID1. Interacts with Turnip mosaic virus (TuMV) VPg-Pro and RNA-dependent RNA polymerase (RdRp). Expressed predominantly in immature flowers.

The protein resides in the cytoplasm. It localises to the nucleus. Binds the poly(A) tail of mRNA. Appears to be an important mediator of the multiple roles of the poly(A) tail in mRNA biogenesis, stability and translation. During infection with potyvirus TuMV, acts as a potential integral component of the viral replicase complex that could play an important role in the regulation of potyviral RNA-dependent RNA polymerase (RdRp). This Arabidopsis thaliana (Mouse-ear cress) protein is Polyadenylate-binding protein 8 (PAB8).